The following is a 410-amino-acid chain: Meiotic driver wtf18 (410 aa).

Positions 1–39 are disordered; that stretch reads MKNKGYPLRSSMDELSTKNDNEIDLEKGPLPEYNSEDGS. Basic and acidic residues predominate over residues 11–29; that stretch reads SMDELSTKNDNEIDLEKGP. A run of 10 helical transmembrane segments spans residues 89–109, 119–139, 149–169, 174–194, 204–224, 229–249, 265–285, 289–309, 319–339, and 353–373; these read LLISVLAVIVVFFTAWVCVNP, AFFVTIGITCPILLITIFCFF, CIKVTVIFLAQCVKVTAVFLA, VTAVFLAKCVKVTAVFLAKCI, CVKVTAVFLAKCVKVIAVGLY, DLVVTIWLAWVVICFILFGCV, CSISAALFFILLLVCIPIWTL, LFGLFQVLGVQSCVVIVTKGL, ATGYEIEASSLFVIGNFLFFY, and FIGNGIASFLGGLGNAFGGIG.

It belongs to the WTF family. As to quaternary structure, homomer. Forms protein aggregates. The two isoforms can interact with each other and with themselves. High sequence similarity is required for their interaction.

Its subcellular location is the spore membrane. It localises to the vacuole membrane. The protein resides in the ascus epiplasm. It is found in the cytoplasm. The protein localises to the endoplasmic reticulum membrane. Its function is as follows. Promotes unequal transmission of alleles from the parental zygote to progeny spores by acting as poison/antidote system where the poison and antidote proteins are produced from the same locus; the poison component is trans-acting and targets all spores within an ascus whereas the antidote component is spore-specific, leading to poisoning of all progeny that do not inherit the allele. Functionally, localizes isoform 2 to the vacuole thereby facilitating its degradation. In addition to suppressing isoform 2, also suppresses S.pombe strain 972 wtf13 isoform 2. Forms toxic aggregates that disrupt spore maturation. The chain is Meiotic driver wtf18 from Schizosaccharomyces pombe (Fission yeast).